The chain runs to 320 residues: Ferrochelatase (320 aa).

2 residues coordinate Fe cation: histidine 194 and glutamate 275.

Belongs to the ferrochelatase family. In terms of assembly, monomer.

It localises to the cytoplasm. The enzyme catalyses heme b + 2 H(+) = protoporphyrin IX + Fe(2+). It participates in porphyrin-containing compound metabolism; protoheme biosynthesis; protoheme from protoporphyrin-IX: step 1/1. Its function is as follows. Catalyzes the ferrous insertion into protoporphyrin IX. The polypeptide is Ferrochelatase (Escherichia coli O9:H4 (strain HS)).